An 89-amino-acid polypeptide reads, in one-letter code: MSSVNESLFEFPCDFPIKIMGKSHPEFAETIVTVVRQFDNEVDASRVETRPSSGGNYTGLTVTVRATSREQLDDIYRALTGHPMVKVVL.

Belongs to the UPF0250 family.

This chain is UPF0250 protein Bphyt_0500, found in Paraburkholderia phytofirmans (strain DSM 17436 / LMG 22146 / PsJN) (Burkholderia phytofirmans).